We begin with the raw amino-acid sequence, 117 residues long: UPF0102 protein YPN_3432 (117 aa).

This sequence belongs to the UPF0102 family.

This chain is UPF0102 protein YPN_3432, found in Yersinia pestis bv. Antiqua (strain Nepal516).